The sequence spans 190 residues: Potassium-transporting ATPase KdpC subunit (190 aa).

Residues 13–33 traverse the membrane as a helical segment; that stretch reads IGFLLLTLVCGVLYPGVVTVF.

Belongs to the KdpC family. The system is composed of three essential subunits: KdpA, KdpB and KdpC.

The protein localises to the cell membrane. Its function is as follows. Part of the high-affinity ATP-driven potassium transport (or Kdp) system, which catalyzes the hydrolysis of ATP coupled with the electrogenic transport of potassium into the cytoplasm. This subunit acts as a catalytic chaperone that increases the ATP-binding affinity of the ATP-hydrolyzing subunit KdpB by the formation of a transient KdpB/KdpC/ATP ternary complex. The chain is Potassium-transporting ATPase KdpC subunit from Listeria monocytogenes serovar 1/2a (strain ATCC BAA-679 / EGD-e).